Here is a 408-residue protein sequence, read N- to C-terminus: Argininosuccinate synthase (408 aa).

ATP-binding positions include 12–20 and alanine 39; that span reads AYSGGLDTS. Residues tyrosine 92 and serine 97 each coordinate L-citrulline. Glycine 122 is a binding site for ATP. 3 residues coordinate L-aspartate: threonine 124, asparagine 128, and aspartate 129. Asparagine 128 is an L-citrulline binding site. The L-citrulline site is built by arginine 132, serine 183, serine 192, glutamate 268, and tyrosine 280.

Belongs to the argininosuccinate synthase family. Type 1 subfamily. As to quaternary structure, homotetramer.

Its subcellular location is the cytoplasm. The catalysed reaction is L-citrulline + L-aspartate + ATP = 2-(N(omega)-L-arginino)succinate + AMP + diphosphate + H(+). It functions in the pathway amino-acid biosynthesis; L-arginine biosynthesis; L-arginine from L-ornithine and carbamoyl phosphate: step 2/3. The protein is Argininosuccinate synthase of Caulobacter vibrioides (strain ATCC 19089 / CIP 103742 / CB 15) (Caulobacter crescentus).